The chain runs to 205 residues: Photosystem I assembly protein Ycf4 (205 aa).

The next 2 membrane-spanning stretches (helical) occupy residues 23–43 and 86–106; these read WATV…SSYI and LMCF…CLIF.

Belongs to the Ycf4 family.

Its subcellular location is the plastid. It localises to the chloroplast thylakoid membrane. Seems to be required for the assembly of the photosystem I complex. This chain is Photosystem I assembly protein Ycf4, found in Tetradesmus obliquus (Green alga).